Reading from the N-terminus, the 228-residue chain is Sodium channel regulatory subunit beta-4 (228 aa).

An N-terminal signal peptide occupies residues 1–30; the sequence is MSRAGNRGNTQARWLGIGLLGLFLLPMYLS. The Ig-like C2-type domain maps to 31–148; the sequence is LEVSVGKATT…KDLNNSATIF (118 aa). The Extracellular segment spans residues 31-161; it reads LEVSVGKATT…VDKLEEVDNT (131 aa). N-linked (GlcNAc...) asparagine glycans are attached at residues Asn45, Asn71, Asn113, and Asn142. Residues Cys53 and Cys131 are joined by a disulfide bond. The helical transmembrane segment at 162-182 threads the bilayer; sequence VTLIILAVVGGVIGLLVCILL. The Cytoplasmic segment spans residues 183 to 228; that stretch reads LKKLITFILKKTREKKKECLVSSSGNDNTENGLPGSKAEEKPPTKV. The segment at 199–228 is disordered; sequence KECLVSSSGNDNTENGLPGSKAEEKPPTKV. The span at 203-213 shows a compositional bias: polar residues; sequence VSSSGNDNTEN. The span at 219–228 shows a compositional bias: basic and acidic residues; the sequence is KAEEKPPTKV.

The protein belongs to the sodium channel auxiliary subunit SCN4B (TC 8.A.17) family. As to quaternary structure, a voltage-gated sodium (Nav) channel consists of an ion-conducting pore-forming alpha subunit functional on its own that is regulated by one or more beta subunits. The beta subunit SCN4B is disulfide-linked to the pore-forming alpha subunit. Interacts with SCN1A; regulatory subunit of SCN1A/Nav1.1. Interacts with SCN2A; regulatory subunit of SCN2A/Nav1.2. Post-translationally, contains an interchain disulfide bond with SCN2A. As to expression, expressed at a high level in dorsal root ganglia, at a lower level in brain, spinal cord, skeletal muscle and heart.

The protein localises to the cell membrane. Regulatory subunit of multiple voltage-gated sodium (Nav) channels directly mediating the depolarization of excitable membranes. Navs, also called VGSCs (voltage-gated sodium channels) or VDSCs (voltage-dependent sodium channels), operate by switching between closed and open conformations depending on the voltage difference across the membrane. In the open conformation they allow Na(+) ions to selectively pass through the pore, along their electrochemical gradient. The influx of Na+ ions provokes membrane depolarization, initiating the propagation of electrical signals throughout cells and tissues. The accessory beta subunits participate in localization and functional modulation of the Nav channels. Modulates the activity of SCN1A/Nav1.1. Modulates the activity of SCN2A/Nav1.2. This Rattus norvegicus (Rat) protein is Sodium channel regulatory subunit beta-4.